The primary structure comprises 295 residues: Protease HtpX homolog (295 aa).

Helical transmembrane passes span 15 to 35 (LVMAGFVFLAGLIGAAIGYAF) and 39 to 59 (AQTGIIIAVVVGIVYMFVILG). Zn(2+) is bound at residue His143. Glu144 is a catalytic residue. His147 contacts Zn(2+). Helical transmembrane passes span 159-179 (ALALASVISFLANMGMNAMWW) and 195-215 (VIMLLLSVLAIILGPLAASMA). Glu224 is a Zn(2+) binding site.

Belongs to the peptidase M48B family. Zn(2+) is required as a cofactor.

The protein resides in the cell membrane. The polypeptide is Protease HtpX homolog (Ligilactobacillus salivarius (strain UCC118) (Lactobacillus salivarius)).